A 141-amino-acid polypeptide reads, in one-letter code: Organic hydroperoxide resistance protein OhrA (141 aa).

The protein belongs to the OsmC/Ohr family.

Involved in organic hydroperoxide resistance. The polypeptide is Organic hydroperoxide resistance protein OhrA (ohrA) (Bacillus subtilis (strain 168)).